A 402-amino-acid polypeptide reads, in one-letter code: Imidazolonepropionase (402 aa).

Positions 66 and 68 each coordinate Fe(3+). Residues His-66 and His-68 each contribute to the Zn(2+) site. Residues Arg-75, Tyr-138, and His-171 each coordinate 4-imidazolone-5-propanoate. Tyr-138 contacts N-formimidoyl-L-glutamate. Residue His-236 participates in Fe(3+) binding. His-236 is a binding site for Zn(2+). Gln-239 is a binding site for 4-imidazolone-5-propanoate. Residue Asp-311 coordinates Fe(3+). Zn(2+) is bound at residue Asp-311. Positions 313 and 315 each coordinate N-formimidoyl-L-glutamate. Thr-316 contributes to the 4-imidazolone-5-propanoate binding site.

Belongs to the metallo-dependent hydrolases superfamily. HutI family. Zn(2+) serves as cofactor. Requires Fe(3+) as cofactor.

The protein localises to the cytoplasm. It catalyses the reaction 4-imidazolone-5-propanoate + H2O = N-formimidoyl-L-glutamate. It participates in amino-acid degradation; L-histidine degradation into L-glutamate; N-formimidoyl-L-glutamate from L-histidine: step 3/3. Its function is as follows. Catalyzes the hydrolytic cleavage of the carbon-nitrogen bond in imidazolone-5-propanoate to yield N-formimidoyl-L-glutamate. It is the third step in the universal histidine degradation pathway. The polypeptide is Imidazolonepropionase (Pseudomonas aeruginosa (strain LESB58)).